Here is a 426-residue protein sequence, read N- to C-terminus: Serine--tRNA ligase (426 aa).

233–235 contributes to the L-serine binding site; that stretch reads TAE. ATP is bound at residue 264 to 266; it reads RRE. Position 287 (glutamate 287) interacts with L-serine. Position 351-354 (351-354) interacts with ATP; that stretch reads EISS. Serine 386 serves as a coordination point for L-serine.

It belongs to the class-II aminoacyl-tRNA synthetase family. Type-1 seryl-tRNA synthetase subfamily. As to quaternary structure, homodimer. The tRNA molecule binds across the dimer.

It localises to the cytoplasm. The enzyme catalyses tRNA(Ser) + L-serine + ATP = L-seryl-tRNA(Ser) + AMP + diphosphate + H(+). It catalyses the reaction tRNA(Sec) + L-serine + ATP = L-seryl-tRNA(Sec) + AMP + diphosphate + H(+). Its pathway is aminoacyl-tRNA biosynthesis; selenocysteinyl-tRNA(Sec) biosynthesis; L-seryl-tRNA(Sec) from L-serine and tRNA(Sec): step 1/1. Catalyzes the attachment of serine to tRNA(Ser). Is also able to aminoacylate tRNA(Sec) with serine, to form the misacylated tRNA L-seryl-tRNA(Sec), which will be further converted into selenocysteinyl-tRNA(Sec). This Prochlorococcus marinus (strain NATL2A) protein is Serine--tRNA ligase.